Reading from the N-terminus, the 1034-residue chain is Teashirt homolog 2 (1034 aa).

Residues 1-90 (MPRRKQQAPK…NESLLSDASD (90 aa)) form a disordered region. Positions 13–38 (AGYAQEEQLKEEEEIKEEEEEEDSGS) form a coiled coil. The span at 21–36 (LKEEEEIKEEEEEEDS) shows a compositional bias: acidic residues. Residues 65–90 (SYQNSPGSHLSNQDAENESLLSDASD) are compositionally biased toward polar residues. K188 is covalently cross-linked (Glycyl lysine isopeptide (Lys-Gly) (interchain with G-Cter in SUMO2)). 2 C2H2-type zinc fingers span residues 215 to 239 (FRCR…ETGH) and 275 to 299 (LKCM…KTKH). A disordered region spans residues 239-265 (HYQDDNRKKDKLRPTSYSKPRKRAFQD). Residues K306 and K315 each participate in a glycyl lysine isopeptide (Lys-Gly) (interchain with G-Cter in SUMO2) cross-link. The C2H2-type 3; atypical zinc-finger motif lies at 380-404 (LKCMECGSSHDTLQQLTTHMMVTGH). K417 is covalently cross-linked (Glycyl lysine isopeptide (Lys-Gly) (interchain with G-Cter in SUMO2)). The segment covering 432-455 (LSEAPNSDSLAPKPSSNSASDCTA) has biased composition (polar residues). Positions 432–496 (LSEAPNSDSL…PLQKPLDPTI (65 aa)) are disordered. Basic and acidic residues predominate over residues 459 to 482 (ELKKESKKERPEETSKDEKVVKSE). Residues K461, K480, K497, K601, and K652 each participate in a glycyl lysine isopeptide (Lys-Gly) (interchain with G-Cter in SUMO2) cross-link. Disordered regions lie at residues 598 to 676 (TQVK…TSAL) and 763 to 789 (QPID…PPQK). Basic and acidic residues predominate over residues 600 to 668 (VKKESEDKDE…KEGSEKEKPQ (69 aa)). Residues K800 and K820 each participate in a glycyl lysine isopeptide (Lys-Gly) (interchain with G-Cter in SUMO2) cross-link. The homeobox; atypical DNA-binding region spans 841–911 (RKGRQSNWNP…NVKYQLRKTG (71 aa)). Residues 926 to 948 (FYCSDCASQFRTPSTYISHLESH) form a C2H2-type 4 zinc finger. Residue K966 forms a Glycyl lysine isopeptide (Lys-Gly) (interchain with G-Cter in SUMO2) linkage. S980 is subject to Phosphoserine. The C2H2-type 5 zinc finger occupies 994–1017 (FKCKLCCRTFVSKHAVKLHLSKTH). A disordered region spans residues 1014 to 1034 (SKTHSKSPEHHSQFVTDVDEE).

It belongs to the teashirt C2H2-type zinc-finger protein family. In terms of assembly, interacts (via homeobox domain) with APBB1 (via PID domain 1). In terms of processing, sumoylated. In terms of tissue distribution, expressed in brain; strongly reduced in post-mortem elderly subjects with Alzheimer disease.

It localises to the nucleus. Its function is as follows. Probable transcriptional regulator involved in developmental processes. May act as a transcriptional repressor (Potential). The protein is Teashirt homolog 2 (TSHZ2) of Homo sapiens (Human).